Here is a 266-residue protein sequence, read N- to C-terminus: Undecaprenyl-diphosphatase 1 (266 aa).

The next 8 membrane-spanning stretches (helical) occupy residues Met1–Ile21, Gln39–Phe59, Ser83–Leu103, Ser113–Ala133, Ile141–Ile161, Phe189–Leu209, Thr218–Leu238, and Met244–Leu264.

Belongs to the UppP family.

It is found in the cell inner membrane. It carries out the reaction di-trans,octa-cis-undecaprenyl diphosphate + H2O = di-trans,octa-cis-undecaprenyl phosphate + phosphate + H(+). Its function is as follows. Catalyzes the dephosphorylation of undecaprenyl diphosphate (UPP). Confers resistance to bacitracin. This is Undecaprenyl-diphosphatase 1 from Pseudoalteromonas translucida (strain TAC 125).